Reading from the N-terminus, the 375-residue chain is Probable pectin lyase D (375 aa).

The signal sequence occupies residues Met-1–Gly-19. Intrachain disulfides connect Cys-82/Cys-101 and Cys-91/Cys-225. Residue Asn-128 is glycosylated (N-linked (GlcNAc...) asparagine). Arg-255 is an active-site residue. The cysteines at positions 321 and 329 are disulfide-linked.

Belongs to the polysaccharide lyase 1 family.

It is found in the secreted. The enzyme catalyses Eliminative cleavage of (1-&gt;4)-alpha-D-galacturonan methyl ester to give oligosaccharides with 4-deoxy-6-O-methyl-alpha-D-galact-4-enuronosyl groups at their non-reducing ends.. Functionally, pectinolytic enzymes consist of four classes of enzymes: pectin lyase, polygalacturonase, pectin methylesterase and rhamnogalacturonase. Among pectinolytic enzymes, pectin lyase is the most important in depolymerization of pectin, since it cleaves internal glycosidic bonds of highly methylated pectins. The protein is Probable pectin lyase D (pelD) of Aspergillus flavus (strain ATCC 200026 / FGSC A1120 / IAM 13836 / NRRL 3357 / JCM 12722 / SRRC 167).